Reading from the N-terminus, the 467-residue chain is Cell division protein FtsP (467 aa).

Positions 1–28 (MRSLTRRDFLKSGILASSLSCIPQSVMA) form a signal peptide, tat-type signal.

It belongs to the FtsP family. Post-translationally, predicted to be exported by the Tat system. The position of the signal peptide cleavage has not been experimentally proven.

It localises to the periplasm. In terms of biological role, cell division protein that is required for growth during stress conditions. May be involved in protecting or stabilizing the divisomal assembly under conditions of stress. In Histophilus somni (strain 2336) (Haemophilus somnus), this protein is Cell division protein FtsP.